The sequence spans 285 residues: Protein phosphatase 1 regulatory subunit 3C (285 aa).

The PP1-binding motif signature appears at 72–75; the sequence is KVVF. The region spanning 133–241 is the CBM21 domain; the sequence is RKRLMKNSVC…NNNGKNYALV (109 aa).

In terms of assembly, interacts with PPP1CC catalytic subunit of PP1 and associates with glycogen. Forms complexes with glycogen phosphorylase, glycogen synthase and phosphorylase kinase which is necessary for its regulation of PP1 activity. Ubiquitously expressed in the examined tissues including brain, muscle, liver and spleen under normoxic condition. Its expression is higher in insulin sensitive tissues (liver and muscle) than in the brain and spleen. Significantly increased expression in the liver and muscle under short-term (1-12 hours) hypoxia exposure. Significantly increased expression after long-term (natural) hypoxia exposure in liver and spleen. No significant differences in expression in brain for any time periods.

Functionally, acts as a glycogen-targeting subunit for PP1 and regulates its activity. Activates glycogen synthase, reduces glycogen phosphorylase activity and limits glycogen breakdown. This is Protein phosphatase 1 regulatory subunit 3C from Clarias batrachus (Walking catfish).